The primary structure comprises 515 residues: Anthranilate synthase component 1 (515 aa).

L-tryptophan-binding positions include S50 and 281–283; that span reads PYM. 316–317 contacts chorismate; it reads GT. Residue E343 coordinates Mg(2+). Chorismate contacts are provided by residues Y431, R451, 465 to 467, and G467; that span reads GAG. Residue E480 coordinates Mg(2+).

Belongs to the anthranilate synthase component I family. As to quaternary structure, heterotetramer consisting of two non-identical subunits: a beta subunit (TrpG) and a large alpha subunit (TrpE). Requires Mg(2+) as cofactor.

It catalyses the reaction chorismate + L-glutamine = anthranilate + pyruvate + L-glutamate + H(+). Its pathway is amino-acid biosynthesis; L-tryptophan biosynthesis; L-tryptophan from chorismate: step 1/5. With respect to regulation, feedback inhibited by tryptophan. Part of a heterotetrameric complex that catalyzes the two-step biosynthesis of anthranilate, an intermediate in the biosynthesis of L-tryptophan. In the first step, the glutamine-binding beta subunit (TrpG) of anthranilate synthase (AS) provides the glutamine amidotransferase activity which generates ammonia as a substrate that, along with chorismate, is used in the second step, catalyzed by the large alpha subunit of AS (TrpE) to produce anthranilate. In the absence of TrpG, TrpE can synthesize anthranilate directly from chorismate and high concentrations of ammonia. The chain is Anthranilate synthase component 1 (trpE) from Bacillus subtilis (strain 168).